The chain runs to 634 residues: Kinesin-like protein KIF22 (634 aa).

The region spanning 19–345 is the Kinesin motor domain; it reads RVRVAVRLRP…LNFAAKSKQI (327 aa). 103–110 provides a ligand contact to ATP; sequence GPTGAGKT. The tract at residues 357–406 is disordered; the sequence is APTIAPGKRTREEQEAGGSGEPQNKRSKEGKKAEHSPSPPLHPQSSPDSS. Positions 379–391 are enriched in basic and acidic residues; it reads QNKRSKEGKKAEH. Residues 421–471 adopt a coiled-coil conformation; that stretch reads SAERERLNLLKTVAQSRKEIQMLKEKQKELEDKANMFNKQKETTEKESKDA.

Belongs to the TRAFAC class myosin-kinesin ATPase superfamily. Kinesin family. Ubiquitinated, leading to its subsequent proteasomal degradation.

It is found in the nucleus. Its subcellular location is the cytoplasm. It localises to the cytoskeleton. In terms of biological role, kinesin family member that is involved in spindle formation and the movements of chromosomes during mitosis and meiosis. Binds to microtubules and to DNA. The sequence is that of Kinesin-like protein KIF22 (kif22) from Danio rerio (Zebrafish).